The chain runs to 195 residues: Protein GrpE (195 aa).

Belongs to the GrpE family. In terms of assembly, homodimer.

The protein localises to the cytoplasm. Participates actively in the response to hyperosmotic and heat shock by preventing the aggregation of stress-denatured proteins, in association with DnaK and GrpE. It is the nucleotide exchange factor for DnaK and may function as a thermosensor. Unfolded proteins bind initially to DnaJ; upon interaction with the DnaJ-bound protein, DnaK hydrolyzes its bound ATP, resulting in the formation of a stable complex. GrpE releases ADP from DnaK; ATP binding to DnaK triggers the release of the substrate protein, thus completing the reaction cycle. Several rounds of ATP-dependent interactions between DnaJ, DnaK and GrpE are required for fully efficient folding. This is Protein GrpE from Blochmanniella floridana.